The following is a 341-amino-acid chain: DNA-directed RNA polymerase subunit alpha (341 aa).

Residues 1 to 233 (MVREEVAGST…DLFLPFLHAE (233 aa)) are alpha N-terminal domain (alpha-NTD). An alpha C-terminal domain (alpha-CTD) region spans residues 269–341 (IPLNCIFIDQ…IDLLKNKLSF (73 aa)).

This sequence belongs to the RNA polymerase alpha chain family. As to quaternary structure, in plastids the minimal PEP RNA polymerase catalytic core is composed of four subunits: alpha, beta, beta', and beta''. When a (nuclear-encoded) sigma factor is associated with the core the holoenzyme is formed, which can initiate transcription.

It localises to the plastid. The protein localises to the chloroplast. It carries out the reaction RNA(n) + a ribonucleoside 5'-triphosphate = RNA(n+1) + diphosphate. Functionally, DNA-dependent RNA polymerase catalyzes the transcription of DNA into RNA using the four ribonucleoside triphosphates as substrates. This chain is DNA-directed RNA polymerase subunit alpha, found in Lolium perenne (Perennial ryegrass).